The chain runs to 523 residues: Cytoplasmic dynein 1 light intermediate chain 1 (523 aa).

Residues 1-25 (MAAVGRVGSFGSSPPGLASTYASGP) are disordered. 74 to 81 (GEDGAGKT) provides a ligand contact to ATP. Disordered stretches follow at residues 200-219 (PGEDFPASPQRRTTGAQEDR), 387-434 (PPTA…DPNM), and 457-523 (GSPG…GEAS). S207 carries the post-translational modification Phosphoserine. The residue at position 213 (T213) is a Phosphothreonine. A phosphoserine mark is found at S398 and S405. T408 is modified (phosphothreonine). 4 positions are modified to phosphoserine: S412, S419, S421, and S427. The segment covering 412–421 (SVSSNVASVS) has biased composition (low complexity). Residues 458–473 (SPGGPGVGGSPGGGAA) show a composition bias toward gly residues. Low complexity predominate over residues 474 to 485 (GASPSLPPSAKK). 2 positions are modified to phosphoserine: S486 and S510. The segment covering 506–523 (PASVSPTTPTSPTEGEAS) has biased composition (low complexity). Phosphothreonine occurs at positions 512, 513, and 515. S516 carries the post-translational modification Phosphoserine.

This sequence belongs to the dynein light intermediate chain family. In terms of assembly, homodimer. The cytoplasmic dynein 1 complex consists of two catalytic heavy chains (HCs) and a number of non-catalytic subunits presented by intermediate chains (ICs), light intermediate chains (LICs) and light chains (LCs); the composition seems to vary in respect to the IC, LIC and LC composition. The heavy chain homodimer serves as a scaffold for the probable homodimeric assembly of the respective non-catalytic subunits. The ICs and LICs bind directly to the HC dimer and the LCs assemble on the IC dimer. Self-associates. Interacts with DYNC1H1; DYNC1LI1 and DYNC1LI2 bind mutually exclusive to DYNC1H1. Interacts with PCNT. Forms a complex with RAB11FIP3 and RAB11A1; the interaction between DYNC1LI1 and RAB11FIP3 is direct and induces DYNC1LI1 localization onto endosomal membrane; the complex regulates endocytic trafficking. Interacts with RUFY3. Phosphorylated during mitosis but not in interphase.

It is found in the cytoplasm. It localises to the chromosome. The protein resides in the centromere. The protein localises to the kinetochore. Its subcellular location is the cytoskeleton. It is found in the spindle pole. It localises to the recycling endosome membrane. In terms of biological role, acts as one of several non-catalytic accessory components of the cytoplasmic dynein 1 complex that are thought to be involved in linking dynein to cargos and to adapter proteins that regulate dynein function. Cytoplasmic dynein 1 acts as a motor for the intracellular retrograde motility of vesicles and organelles along microtubules. May play a role in binding dynein to membranous organelles or chromosomes. Probably involved in the microtubule-dependent transport of pericentrin. Is required for progress through the spindle assembly checkpoint. The phosphorylated form appears to be involved in the selective removal of MAD1L1 and MAD1L2 but not BUB1B from kinetochores. Forms a functional Rab11/RAB11FIP3/dynein complex onto endosomal membrane that regulates the movement of peripheral sorting endosomes (SE) along microtubule tracks toward the microtubule organizing center/centrosome, generating the endosomal recycling compartment (ERC). The chain is Cytoplasmic dynein 1 light intermediate chain 1 (Dync1li1) from Mus musculus (Mouse).